Here is a 432-residue protein sequence, read N- to C-terminus: Trigger factor (432 aa).

The region spanning 161 to 246 is the PPIase FKBP-type domain; that stretch reads EDRVTIDFTG…LKKVEERELP (86 aa).

It belongs to the FKBP-type PPIase family. Tig subfamily.

It is found in the cytoplasm. It catalyses the reaction [protein]-peptidylproline (omega=180) = [protein]-peptidylproline (omega=0). Involved in protein export. Acts as a chaperone by maintaining the newly synthesized protein in an open conformation. Functions as a peptidyl-prolyl cis-trans isomerase. The sequence is that of Trigger factor from Salmonella schwarzengrund (strain CVM19633).